A 147-amino-acid polypeptide reads, in one-letter code: Small ribosomal subunit protein uS12 (147 aa).

Belongs to the universal ribosomal protein uS12 family. In terms of assembly, part of the 30S ribosomal subunit.

With S4 and S5 plays an important role in translational accuracy. Located at the interface of the 30S and 50S subunits. This chain is Small ribosomal subunit protein uS12, found in Ignicoccus hospitalis (strain KIN4/I / DSM 18386 / JCM 14125).